The following is a 471-amino-acid chain: Methylenetetrahydrofolate--tRNA-(uracil-5-)-methyltransferase TrmFO (471 aa).

13-18 (GGGLAG) contributes to the FAD binding site.

Belongs to the MnmG family. TrmFO subfamily. Requires FAD as cofactor.

The protein localises to the cytoplasm. It carries out the reaction uridine(54) in tRNA + (6R)-5,10-methylene-5,6,7,8-tetrahydrofolate + NADH + H(+) = 5-methyluridine(54) in tRNA + (6S)-5,6,7,8-tetrahydrofolate + NAD(+). The catalysed reaction is uridine(54) in tRNA + (6R)-5,10-methylene-5,6,7,8-tetrahydrofolate + NADPH + H(+) = 5-methyluridine(54) in tRNA + (6S)-5,6,7,8-tetrahydrofolate + NADP(+). In terms of biological role, catalyzes the folate-dependent formation of 5-methyl-uridine at position 54 (M-5-U54) in all tRNAs. In Azorhizobium caulinodans (strain ATCC 43989 / DSM 5975 / JCM 20966 / LMG 6465 / NBRC 14845 / NCIMB 13405 / ORS 571), this protein is Methylenetetrahydrofolate--tRNA-(uracil-5-)-methyltransferase TrmFO.